The primary structure comprises 307 residues: Acetyl-coenzyme A carboxylase carboxyl transferase subunit beta (307 aa).

Residues 28–297 (LWVKCPDTGQ…TPEPGTAPEP (270 aa)) enclose the CoA carboxyltransferase N-terminal domain. Positions 286 to 307 (RRTPEPGTAPEPTTPEPLPNAA) are disordered. Residues 292–307 (GTAPEPTTPEPLPNAA) show a composition bias toward pro residues.

Belongs to the AccD/PCCB family. As to quaternary structure, acetyl-CoA carboxylase is a heterohexamer composed of biotin carboxyl carrier protein (AccB), biotin carboxylase (AccC) and two subunits each of ACCase subunit alpha (AccA) and ACCase subunit beta (AccD).

The protein resides in the cytoplasm. It catalyses the reaction N(6)-carboxybiotinyl-L-lysyl-[protein] + acetyl-CoA = N(6)-biotinyl-L-lysyl-[protein] + malonyl-CoA. It functions in the pathway lipid metabolism; malonyl-CoA biosynthesis; malonyl-CoA from acetyl-CoA: step 1/1. Its function is as follows. Component of the acetyl coenzyme A carboxylase (ACC) complex. Biotin carboxylase (BC) catalyzes the carboxylation of biotin on its carrier protein (BCCP) and then the CO(2) group is transferred by the transcarboxylase to acetyl-CoA to form malonyl-CoA. This Methylorubrum extorquens (strain ATCC 14718 / DSM 1338 / JCM 2805 / NCIMB 9133 / AM1) (Methylobacterium extorquens) protein is Acetyl-coenzyme A carboxylase carboxyl transferase subunit beta.